The following is a 376-amino-acid chain: DNA double-strand break repair protein Mre11 (376 aa).

Mn(2+)-binding residues include Asp5, His7, Asp46, and Asp81. His82 acts as the Proton donor in catalysis. Mn(2+)-binding residues include His159, His189, and His191.

It belongs to the MRE11/RAD32 family. Homodimer. Forms a heterotetramer composed of two Mre11 subunits and two Rad50 subunits. The cofactor is Mn(2+).

Its activity is regulated as follows. Nuclease activity is regulated by Rad50. Part of the Rad50/Mre11 complex, which is involved in the early steps of DNA double-strand break (DSB) repair. The complex may facilitate opening of the processed DNA ends to aid in the recruitment of HerA and NurA. Mre11 binds to DSB ends and has both double-stranded 3'-5' exonuclease activity and single-stranded endonuclease activity. This Thermoplasma acidophilum (strain ATCC 25905 / DSM 1728 / JCM 9062 / NBRC 15155 / AMRC-C165) protein is DNA double-strand break repair protein Mre11.